Reading from the N-terminus, the 78-residue chain is Protein SlyX homolog (78 aa).

Belongs to the SlyX family.

The chain is Protein SlyX homolog from Xanthomonas axonopodis pv. citri (strain 306).